A 133-amino-acid chain; its full sequence is Mediator of RNA polymerase II transcription subunit 10 (133 aa).

This sequence belongs to the Mediator complex subunit 10 family. Component of the Mediator complex. Interacts with MED4 and MED21.

It is found in the nucleus. In terms of biological role, component of the Mediator complex, a coactivator involved in the regulated transcription of nearly all RNA polymerase II-dependent genes. Mediator functions as a bridge to convey information from gene-specific regulatory proteins to the basal RNA polymerase II transcription machinery. Mediator is recruited to promoters by direct interactions with regulatory proteins and serves as a scaffold for the assembly of a functional preinitiation complex with RNA polymerase II and the general transcription factors. Required for activated transcription of the MtnA, MtnB and MtnD genes. The chain is Mediator of RNA polymerase II transcription subunit 10 (MED10) from Drosophila melanogaster (Fruit fly).